We begin with the raw amino-acid sequence, 90 residues long: Small ribosomal subunit protein uS15c (90 aa).

Belongs to the universal ribosomal protein uS15 family. In terms of assembly, part of the 30S ribosomal subunit.

The protein resides in the plastid. The protein localises to the chloroplast. The chain is Small ribosomal subunit protein uS15c (rps15) from Panax ginseng (Korean ginseng).